Consider the following 361-residue polypeptide: Phenylalanine--tRNA ligase alpha subunit (361 aa).

Glu260 contacts Mg(2+).

The protein belongs to the class-II aminoacyl-tRNA synthetase family. Phe-tRNA synthetase alpha subunit type 1 subfamily. As to quaternary structure, tetramer of two alpha and two beta subunits. Mg(2+) serves as cofactor.

Its subcellular location is the cytoplasm. The catalysed reaction is tRNA(Phe) + L-phenylalanine + ATP = L-phenylalanyl-tRNA(Phe) + AMP + diphosphate + H(+). This is Phenylalanine--tRNA ligase alpha subunit from Allorhizobium ampelinum (strain ATCC BAA-846 / DSM 112012 / S4) (Agrobacterium vitis (strain S4)).